The following is a 308-amino-acid chain: Beta-carotene hydroxylase 2, chloroplastic (308 aa).

The transit peptide at 1–59 (MAAARISFSSTSRTSYYRHSPFLGPKPTPTTPSVYPITPFSPNLGSILRCRRRPSFTVC) directs the protein to the chloroplast. Helical transmembrane passes span 105–125 (YLVA…MAVY) and 139–159 (FSEM…MEFW). The 128-residue stretch at 152 to 279 (AAVGMEFWAR…KFNGVPYGLF (128 aa)) folds into the Fatty acid hydroxylase domain. The short motif at 164–169 (HKALWH) is the Histidine box-1 element. Positions 176-180 (HESHH) match the Histidine box-2 motif. The next 2 membrane-spanning stretches (helical) occupy residues 191-211 (DVFA…GFFH) and 215-235 (IPGL…AYMF). A Histidine box-3 motif is present at residues 237–242 (HDGLVH). The Histidine box-4 motif lies at 263–267 (HSLHH).

The protein belongs to the sterol desaturase family.

The protein localises to the plastid. It localises to the chloroplast membrane. The enzyme catalyses all-trans-beta-carotene + 4 reduced [2Fe-2S]-[ferredoxin] + 2 O2 + 4 H(+) = all-trans-zeaxanthin + 4 oxidized [2Fe-2S]-[ferredoxin] + 2 H2O. It catalyses the reaction all-trans-beta-carotene + 2 reduced [2Fe-2S]-[ferredoxin] + O2 + 2 H(+) = beta-cryptoxanthin + 2 oxidized [2Fe-2S]-[ferredoxin] + H2O. The catalysed reaction is beta-cryptoxanthin + 2 reduced [2Fe-2S]-[ferredoxin] + O2 + 2 H(+) = all-trans-zeaxanthin + 2 oxidized [2Fe-2S]-[ferredoxin] + H2O. With respect to regulation, inhibited by o-phenanthroline and 8-hydroxyquinoline. Nonheme diiron monooxygenase involved in the biosynthesis of xanthophylls. Specific for beta-ring hydroxylations of beta-carotene. Produces beta-cryptoxanthin and zeaxanthin. Uses ferredoxin as an electron donor. This chain is Beta-carotene hydroxylase 2, chloroplastic, found in Capsicum annuum (Capsicum pepper).